A 168-amino-acid chain; its full sequence is Transcription antitermination protein NusB (168 aa).

Belongs to the NusB family.

Functionally, involved in transcription antitermination. Required for transcription of ribosomal RNA (rRNA) genes. Binds specifically to the boxA antiterminator sequence of the ribosomal RNA (rrn) operons. This Bradyrhizobium sp. (strain ORS 278) protein is Transcription antitermination protein NusB.